A 474-amino-acid polypeptide reads, in one-letter code: MAKEISSELLNTILTRVGGPGNIASCGNCMTRLRLGVHDSSLVDPNIKTLEGVKGVILTSDQVQVVFGPGKAHRAAKAMSELLGDAPVQDAAEIAAQNKRQLKAKQTSGVQQFLAKFATIFTPLIPGFIAAGLLLGIATLIATVMHVPADAQGTLPDALNFMKVFSKGLFTFLVILVGYNAAQAFGGTGVNGAIIAALFLLGYNPAATTGYYAGFHDFFGLPIDPRGNIIGVLIAAWACARIEGMVRRFMPDDLDMLLTSLITLLITATLAYLIIMPLGGWLFEGMSWLFMHLNSNPFGCAVLAGLFLIAVVFGVHQGFIPVYLALMDSQGFNSLFPILSMAGAGQVGAALALYWRAQPHSALRSQVRGAIIPGLLGVGEPLIYGVTLPRMKPFVTACLGGAAGGLFIGLIAWWGLPMGLNSAFGPSGLVALPLMTSAQGILPAMAVYAGGILVAWVCGFIFTTLFGCRNVNLD.

The PTS EIIB type-1 domain maps to 1–89; it reads MAKEISSELL…SELLGDAPVQ (89 aa). Topologically, residues 1-123 are cytoplasmic; that stretch reads MAKEISSELL…LAKFATIFTP (123 aa). Residue cysteine 29 is the Phosphocysteine intermediate; for EIIB activity of the active site. In terms of domain architecture, PTS EIIC type-1 spans 115–474; it reads AKFATIFTPL…LFGCRNVNLD (360 aa). Residues 124–144 traverse the membrane as a helical segment; it reads LIPGFIAAGLLLGIATLIATV. The Periplasmic segment spans residues 145–157; the sequence is MHVPADAQGTLPD. Residues 158–178 form a helical membrane-spanning segment; it reads ALNFMKVFSKGLFTFLVILVG. Residues 179–180 are Cytoplasmic-facing; the sequence is YN. Residues 181 to 201 form a helical membrane-spanning segment; sequence AAQAFGGTGVNGAIIAALFLL. The Periplasmic portion of the chain corresponds to 202 to 217; that stretch reads GYNPAATTGYYAGFHD. The chain crosses the membrane as a helical span at residues 218-238; that stretch reads FFGLPIDPRGNIIGVLIAAWA. At 239–260 the chain is on the cytoplasmic side; sequence CARIEGMVRRFMPDDLDMLLTS. Residues 261–281 form a helical membrane-spanning segment; it reads LITLLITATLAYLIIMPLGGW. The Periplasmic segment spans residues 282 to 301; the sequence is LFEGMSWLFMHLNSNPFGCA. A helical transmembrane segment spans residues 302-322; that stretch reads VLAGLFLIAVVFGVHQGFIPV. Over 323–334 the chain is Cytoplasmic; the sequence is YLALMDSQGFNS. The helical transmembrane segment at 335–355 threads the bilayer; that stretch reads LFPILSMAGAGQVGAALALYW. Topologically, residues 356–368 are periplasmic; sequence RAQPHSALRSQVR. Residues 369–389 form a helical membrane-spanning segment; it reads GAIIPGLLGVGEPLIYGVTLP. At 390 to 393 the chain is on the cytoplasmic side; that stretch reads RMKP. Residues 394-414 traverse the membrane as a helical segment; it reads FVTACLGGAAGGLFIGLIAWW. Residues 415–440 lie on the Periplasmic side of the membrane; the sequence is GLPMGLNSAFGPSGLVALPLMTSAQG. Residues 441-461 form a helical membrane-spanning segment; it reads ILPAMAVYAGGILVAWVCGFI. At 462 to 474 the chain is on the cytoplasmic side; that stretch reads FTTLFGCRNVNLD.

The protein localises to the cell inner membrane. The enzyme catalyses N-acetyl-beta-D-muramate(out) + N(pros)-phospho-L-histidyl-[protein] = N-acetyl-beta-D-muramate 6-phosphate(in) + L-histidyl-[protein]. Its function is as follows. The phosphoenolpyruvate-dependent sugar phosphotransferase system (sugar PTS), a major carbohydrate active transport system, catalyzes the phosphorylation of incoming sugar substrates concomitantly with their translocation across the cell membrane. This system is involved in N-acetylmuramic acid (MurNAc) transport, yielding cytoplasmic MurNAc-6-P. Is also able to take up anhydro-N-acetylmuramic acid (anhMurNAc), but cannot phosphorylate the carbon 6, probably because of the 1,6-anhydro ring. In Shigella flexneri, this protein is PTS system N-acetylmuramic acid-specific EIIBC component (murP).